We begin with the raw amino-acid sequence, 200 residues long: Putative protein ATXN8OS (200 aa).

The interval 19 to 39 (PFSGLKEEEEEDGEDDEEEEE) is disordered. The segment covering 25–39 (EEEEEDGEDDEEEEE) has biased composition (acidic residues).

As to expression, expressed in brain. Expressed in muscle tissues (at protein level).

The protein resides in the cytoplasm. The chain is Putative protein ATXN8OS from Homo sapiens (Human).